Here is a 102-residue protein sequence, read N- to C-terminus: Small ribosomal subunit protein uS10 (102 aa).

It belongs to the universal ribosomal protein uS10 family. Part of the 30S ribosomal subunit.

In terms of biological role, involved in the binding of tRNA to the ribosomes. This chain is Small ribosomal subunit protein uS10, found in Desulfitobacterium hafniense (strain DSM 10664 / DCB-2).